Here is a 289-residue protein sequence, read N- to C-terminus: uncharacterized protein (289 aa).

An HTH lysR-type domain is found at 1–58 (MDEKDWILLKILHEEQSVTKTAERLFTSQPSITYRLKKIEEIFGIELFTKRHKGITFT). The segment at residues 18–37 (VTKTAERLFTSQPSITYRLK) is a DNA-binding region (H-T-H motif).

Belongs to the LysR transcriptional regulatory family.

This is an uncharacterized protein from Bacillus subtilis (strain 168).